The sequence spans 37 residues: NADH dehydrogenase [ubiquinone] 1 alpha subcomplex subunit 5 (37 aa).

The protein belongs to the complex I NDUFA5 subunit family. As to quaternary structure, complex I is composed of about 45 different subunits.

Its subcellular location is the mitochondrion inner membrane. Accessory subunit of the mitochondrial membrane respiratory chain NADH dehydrogenase (Complex I), that is believed not to be involved in catalysis. Complex I functions in the transfer of electrons from NADH to the respiratory chain. The immediate electron acceptor for the enzyme is believed to be ubiquinone. This chain is NADH dehydrogenase [ubiquinone] 1 alpha subcomplex subunit 5, found in Solanum tuberosum (Potato).